A 329-amino-acid polypeptide reads, in one-letter code: Basic leucine zipper 61 (329 aa).

2 disordered regions span residues 1-22 and 98-204; these read MAQL…FSSQ and DDVH…HDPK. The segment covering 10-22 has biased composition (polar residues); that stretch reads TMTTPNWPDFSSQ. The span at 119 to 133 shows a compositional bias: low complexity; the sequence is PTRSSSNTSTPSDHN. Residues 139–154 show a composition bias toward basic and acidic residues; that stretch reads DNNKEAPPSDHDHHMD. Over residues 155 to 169 the composition is skewed to low complexity; it reads NNVANQNNAAGNNYN. One can recognise a bZIP domain in the interval 202–254; it reads DPKRVKRILANRQSAQRSRVRKLQYISELERSVTSLQTEVSVLSPRVAFLDHQ. Residues 204–223 form a basic motif region; it reads KRVKRILANRQSAQRSRVRK. The segment at 230-251 is leucine-zipper; it reads LERSVTSLQTEVSVLSPRVAFL. Over residues 304–313 the composition is skewed to polar residues; sequence KMENNVSDQS. Residues 304–329 form a disordered region; sequence KMENNVSDQSPADIKPSVEKEQLLNV. The span at 319–329 shows a compositional bias: basic and acidic residues; sequence PSVEKEQLLNV.

In terms of assembly, forms heterodimers with BZIP18, BZIP43 and VIP1/BZIP51.

It is found in the nucleus. Its function is as follows. Transcriptional activator. This is Basic leucine zipper 61 from Arabidopsis thaliana (Mouse-ear cress).